The primary structure comprises 73 residues: Ocellatin-PT8 (73 aa).

The N-terminal stretch at 1–22 (MAFLKKSLFLVLFLGLVSLSIC) is a signal peptide. Residues 23–39 (DEEKRQDEDDDDDDDEE) constitute a propeptide that is removed on maturation.

As to expression, expressed by the skin glands.

It is found in the secreted. Has antibacterial activity against Gram-negative bacteria E.coli ATCC 25922 (MIC=60 uM), K.pneumoniae ATCC 700603 (MIC=240 uM) and S.choleraesuis ATCC 14028 (MIC=240 uM) and against Gram-positive bacterium S.aureus ATCC 29313 (MIC=240 uM). Shows no hemolytic activity and no cytotoxicity. This is Ocellatin-PT8 from Leptodactylus pustulatus (Ceara white-lipped frog).